A 545-amino-acid polypeptide reads, in one-letter code: CTP synthase (545 aa).

The segment at 1–266 (MTTNYIFVTG…DDYICKRFSL (266 aa)) is amidoligase domain. Residue Ser-14 participates in CTP binding. Ser-14 contributes to the UTP binding site. Residues 15–20 (SLGKGI) and Asp-72 each bind ATP. Mg(2+) is bound by residues Asp-72 and Glu-140. Residues 147 to 149 (DIE), 187 to 192 (KTKPTQ), and Lys-223 contribute to the CTP site. Residues 187–192 (KTKPTQ) and Lys-223 contribute to the UTP site. An ATP-binding site is contributed by 239–241 (KDV). A Glutamine amidotransferase type-1 domain is found at 291–542 (TIGMVGKYIE…VKAASEYQKR (252 aa)). Gly-352 lines the L-glutamine pocket. Cys-379 serves as the catalytic Nucleophile; for glutamine hydrolysis. L-glutamine is bound by residues 380–383 (LGMQ), Glu-403, and Arg-470. Catalysis depends on residues His-515 and Glu-517.

This sequence belongs to the CTP synthase family. As to quaternary structure, homotetramer.

The enzyme catalyses UTP + L-glutamine + ATP + H2O = CTP + L-glutamate + ADP + phosphate + 2 H(+). The catalysed reaction is L-glutamine + H2O = L-glutamate + NH4(+). It catalyses the reaction UTP + NH4(+) + ATP = CTP + ADP + phosphate + 2 H(+). The protein operates within pyrimidine metabolism; CTP biosynthesis via de novo pathway; CTP from UDP: step 2/2. With respect to regulation, allosterically activated by GTP, when glutamine is the substrate; GTP has no effect on the reaction when ammonia is the substrate. The allosteric effector GTP functions by stabilizing the protein conformation that binds the tetrahedral intermediate(s) formed during glutamine hydrolysis. Inhibited by the product CTP, via allosteric rather than competitive inhibition. Catalyzes the ATP-dependent amination of UTP to CTP with either L-glutamine or ammonia as the source of nitrogen. Regulates intracellular CTP levels through interactions with the four ribonucleotide triphosphates. This Klebsiella pneumoniae (strain 342) protein is CTP synthase.